Here is a 554-residue protein sequence, read N- to C-terminus: Cytochrome P450 monooxygenase himC (554 aa).

A helical transmembrane segment spans residues 52-72 (YSVASVAIAGFTALVVSVALY). N110, N328, N414, and N425 each carry an N-linked (GlcNAc...) asparagine glycan. C501 provides a ligand contact to heme.

It belongs to the cytochrome P450 family. Heme serves as cofactor.

It localises to the membrane. It functions in the pathway secondary metabolite biosynthesis. Its function is as follows. Cytochrome P450 monooxygenase; part of the him gene cluster that mediates the biosynthesis of himeic acid A, a ubiquitin-activating enzyme (E1) inhibitor. First, himA, together with the trans-enoyl reductase himH, catalyzes the formation of apolyketide chain, which is then condensed with leucine by the NRPS activity of himA. Dieckmann cyclization and release from himA gives a tetramic acid intermediate as the product of himA PKS-NRPS. HimG then catalyzes alpha-oxidation of the tetramic acid ring, with a subsequent rearrangement to yield apyrone intermediate. Two terminal methyl groups of polyketide and amide side chains are oxidized to carboxylic acids by himC cytochrome P450 monooxygenase to form himeic acid A. Himeic acid A is further converted to himeic acid B and C during culture growth. No gene responsible for pyrone to pyridone conversion was found in the him gene cluster and himeic acid A is non-enzymatically converted to himeic acid C by the incorporation of an ammonium nitrogen atom in a pH5 buffer, and to himeic acid B at a conversion ratio of 50% during incubation in MeOH for 5 days. This is Cytochrome P450 monooxygenase himC from Aspergillus japonicus.